The primary structure comprises 300 residues: NAD kinase (300 aa).

Asp-75 functions as the Proton acceptor in the catalytic mechanism. NAD(+) is bound by residues 75-76 (DG), 149-150 (ND), Arg-177, Asp-179, 190-195 (TAYALS), Ala-214, and Gln-248.

It belongs to the NAD kinase family. A divalent metal cation serves as cofactor.

The protein resides in the cytoplasm. It catalyses the reaction NAD(+) + ATP = ADP + NADP(+) + H(+). In terms of biological role, involved in the regulation of the intracellular balance of NAD and NADP, and is a key enzyme in the biosynthesis of NADP. Catalyzes specifically the phosphorylation on 2'-hydroxyl of the adenosine moiety of NAD to yield NADP. This is NAD kinase from Burkholderia mallei (strain SAVP1).